The following is a 479-amino-acid chain: Poly(A) polymerase catalytic subunit (479 aa).

Residues Asp-202 and Asp-204 contribute to the active site. Ca(2+)-binding residues include Asp-202, Asp-204, and Asp-253.

It belongs to the poxviridae poly(A) polymerase catalytic subunit family. In terms of assembly, heterodimer of a large (catalytic) subunit and a small (regulatory) subunit.

It carries out the reaction RNA(n) + ATP = RNA(n)-3'-adenine ribonucleotide + diphosphate. Functionally, polymerase that creates the 3'-poly(A) tail of mRNA's. The polypeptide is Poly(A) polymerase catalytic subunit (OPG063) (Homo sapiens (Human)).